The following is a 306-amino-acid chain: Methionyl-tRNA formyltransferase (306 aa).

108-111 (SLLP) is a binding site for (6S)-5,6,7,8-tetrahydrofolate.

It belongs to the Fmt family.

The catalysed reaction is L-methionyl-tRNA(fMet) + (6R)-10-formyltetrahydrofolate = N-formyl-L-methionyl-tRNA(fMet) + (6S)-5,6,7,8-tetrahydrofolate + H(+). In terms of biological role, attaches a formyl group to the free amino group of methionyl-tRNA(fMet). The formyl group appears to play a dual role in the initiator identity of N-formylmethionyl-tRNA by promoting its recognition by IF2 and preventing the misappropriation of this tRNA by the elongation apparatus. This chain is Methionyl-tRNA formyltransferase, found in Paenarthrobacter aurescens (strain TC1).